Here is a 689-residue protein sequence, read N- to C-terminus: Methionine--tRNA ligase (689 aa).

The 'HIGH' region signature appears at 15-25; it reads PYANGPIHLGH. Zn(2+) is bound by residues Cys-146, Cys-149, Cys-159, and Cys-162. Positions 332 to 336 match the 'KMSKS' region motif; sequence KMSKS. Lys-335 provides a ligand contact to ATP. The tract at residues 546–577 is disordered; it reads KDNLQPTEAPKADKKADKKVEKKATTGDPLTD. Positions 555–570 are enriched in basic and acidic residues; the sequence is PKADKKADKKVEKKAT. The tRNA-binding domain occupies 588–689; that stretch reads DFAKLDLRIA…QGAKPGMRVK (102 aa).

It belongs to the class-I aminoacyl-tRNA synthetase family. MetG type 1 subfamily. Homodimer. Zn(2+) serves as cofactor.

It localises to the cytoplasm. The catalysed reaction is tRNA(Met) + L-methionine + ATP = L-methionyl-tRNA(Met) + AMP + diphosphate. In terms of biological role, is required not only for elongation of protein synthesis but also for the initiation of all mRNA translation through initiator tRNA(fMet) aminoacylation. This chain is Methionine--tRNA ligase, found in Shewanella denitrificans (strain OS217 / ATCC BAA-1090 / DSM 15013).